Reading from the N-terminus, the 138-residue chain is Phosphoribosyl-AMP cyclohydrolase (138 aa).

Asp84 contacts Mg(2+). Cys85 provides a ligand contact to Zn(2+). Residues Asp86 and Asp88 each contribute to the Mg(2+) site. Residues Cys102 and Cys109 each coordinate Zn(2+).

It belongs to the PRA-CH family. Homodimer. Mg(2+) is required as a cofactor. Requires Zn(2+) as cofactor.

The protein resides in the cytoplasm. The catalysed reaction is 1-(5-phospho-beta-D-ribosyl)-5'-AMP + H2O = 1-(5-phospho-beta-D-ribosyl)-5-[(5-phospho-beta-D-ribosylamino)methylideneamino]imidazole-4-carboxamide. It functions in the pathway amino-acid biosynthesis; L-histidine biosynthesis; L-histidine from 5-phospho-alpha-D-ribose 1-diphosphate: step 3/9. In terms of biological role, catalyzes the hydrolysis of the adenine ring of phosphoribosyl-AMP. In Burkholderia multivorans (strain ATCC 17616 / 249), this protein is Phosphoribosyl-AMP cyclohydrolase.